The sequence spans 201 residues: Charged multivesicular body protein 6 (201 aa).

Residue Gly-2 is the site of N-myristoyl glycine attachment. Residues 10–145 adopt a coiled-coil conformation; the sequence is QSRVTEQDKA…YQRQIDELLA (136 aa). Ser-119 carries the phosphoserine modification. Thr-130 is subject to Phosphothreonine. A Type-2 MIT-interacting motif motif is present at residues 168 to 179; the sequence is IELPEVPSEPLP. The interval 170 to 181 is interaction with VPS4A; sequence LPEVPSEPLPEK.

Belongs to the SNF7 family. As to quaternary structure, probable core component of the endosomal sorting required for transport complex III (ESCRT-III). ESCRT-III components are thought to multimerize to form a flat lattice on the perimeter membrane of the endosome. Several assembly forms of ESCRT-III may exist that interact and act sequentially. Interacts with VPS4A; the interaction is direct. Interacts with VPS4B; the interaction is direct. Interacts with CHMP4A, CHMP4B and CHMP4C. Interacts with SNF8, VPS25 and VPS36. Post-translationally, ISGylated in a CHMP5-dependent manner. Isgylation weakens its interaction with VPS4A. Ubiquitously expressed.

It is found in the endomembrane system. It localises to the endosome membrane. The protein resides in the late endosome membrane. Its subcellular location is the membrane. Probable core component of the endosomal sorting required for transport complex III (ESCRT-III) which is involved in multivesicular bodies (MVBs) formation and sorting of endosomal cargo proteins into MVBs. MVBs contain intraluminal vesicles (ILVs) that are generated by invagination and scission from the limiting membrane of the endosome and mostly are delivered to lysosomes enabling degradation of membrane proteins, such as stimulated growth factor receptors, lysosomal enzymes and lipids. The MVB pathway appears to require the sequential function of ESCRT-O, -I,-II and -III complexes. ESCRT-III proteins mostly dissociate from the invaginating membrane before the ILV is released. The ESCRT machinery also functions in topologically equivalent membrane fission events, such as the terminal stages of cytokinesis and the budding of enveloped viruses (HIV-1 and other lentiviruses). ESCRT-III proteins are believed to mediate the necessary vesicle extrusion and/or membrane fission activities, possibly in conjunction with the AAA ATPase VPS4. In the ESCRT-III complex, it probably serves as an acceptor for the ESCRT-II complex on endosomal membranes. The polypeptide is Charged multivesicular body protein 6 (CHMP6) (Homo sapiens (Human)).